Reading from the N-terminus, the 314-residue chain is MHAYLHCLSHSPLVGYVDPAQEVLDEVNGVIASARERIAAFSPELVVLFAPDHYNGFFYDVMPPFCLGVGATAIGDFGSAAGELPVPVELAEACAHAVMKSGIDLAVSYCMQVDHGFAQPLEFLLGGLDKVPVLPVFINGVATPLPGFQRTRMLGEAIGRFTSTLNKRVLFLGSGGLSHQPPVPELAKADAHMRDRLLGSGKDLPASERELRQQRVISAAEKFVEDQRTLHPLNPIWDNQFMTLLEQGRIQELDAVSNEELSAIAGKSTHEIKTWVAAFAAISTFGNWRSEGRYYRPIPEWIAGFGSLSARTEN.

The active-site Proton donor is H115. Catalysis depends on H179, which acts as the Proton acceptor.

Belongs to the LigB/MhpB extradiol dioxygenase family. As to quaternary structure, homotetramer. It depends on Fe(2+) as a cofactor.

It carries out the reaction 3-(2,3-dihydroxyphenyl)propanoate + O2 = (2Z,4E)-2-hydroxy-6-oxonona-2,4-dienedioate + H(+). The catalysed reaction is (2E)-3-(2,3-dihydroxyphenyl)prop-2-enoate + O2 = (2Z,4E,7E)-2-hydroxy-6-oxonona-2,4,7-trienedioate + H(+). It functions in the pathway aromatic compound metabolism; 3-phenylpropanoate degradation. Catalyzes the non-heme iron(II)-dependent oxidative cleavage of 2,3-dihydroxyphenylpropionic acid and 2,3-dihydroxicinnamic acid into 2-hydroxy-6-ketononadienedioate and 2-hydroxy-6-ketononatrienedioate, respectively. The polypeptide is 2,3-dihydroxyphenylpropionate/2,3-dihydroxicinnamic acid 1,2-dioxygenase (Escherichia coli O139:H28 (strain E24377A / ETEC)).